The following is a 212-amino-acid chain: ATP phosphoribosyltransferase (212 aa).

It belongs to the ATP phosphoribosyltransferase family. Short subfamily. Heteromultimer composed of HisG and HisZ subunits.

It localises to the cytoplasm. It catalyses the reaction 1-(5-phospho-beta-D-ribosyl)-ATP + diphosphate = 5-phospho-alpha-D-ribose 1-diphosphate + ATP. Its pathway is amino-acid biosynthesis; L-histidine biosynthesis; L-histidine from 5-phospho-alpha-D-ribose 1-diphosphate: step 1/9. Catalyzes the condensation of ATP and 5-phosphoribose 1-diphosphate to form N'-(5'-phosphoribosyl)-ATP (PR-ATP). Has a crucial role in the pathway because the rate of histidine biosynthesis seems to be controlled primarily by regulation of HisG enzymatic activity. The chain is ATP phosphoribosyltransferase from Prochlorococcus marinus (strain MIT 9312).